The primary structure comprises 130 residues: Small ribosomal subunit protein uS9 (130 aa).

Belongs to the universal ribosomal protein uS9 family.

The polypeptide is Small ribosomal subunit protein uS9 (Stenotrophomonas maltophilia (strain R551-3)).